Consider the following 402-residue polypeptide: Propionate kinase (402 aa).

2 residues coordinate ATP: Asn-11 and Lys-18. Mg(2+) is bound at residue Asn-11. Arg-86 lines the substrate pocket. The active-site Proton donor/acceptor is the Asp-143. Residues His-175, 203 to 207 (HLGNG), 278 to 280 (DLR), and 326 to 330 (GIGEN) contribute to the ATP site.

This sequence belongs to the acetokinase family. TdcD subfamily. In terms of assembly, homodimer. Mg(2+) is required as a cofactor.

The catalysed reaction is propanoate + ATP = propanoyl phosphate + ADP. Its pathway is amino-acid degradation; L-threonine degradation via propanoate pathway; propanoate from L-threonine: step 4/4. Its function is as follows. Catalyzes the conversion of propionyl phosphate and ADP to propionate and ATP. This is Propionate kinase from Enterobacter sp. (strain 638).